Reading from the N-terminus, the 239-residue chain is MNIEEFISSLAEKGISLSDRQLEQFELYYRMLVEWNEKMNLTSITEKKDVYLKHFYDSITAAFYIDFEKVTTLCDVGAGAGFPSLPIKICFPHLHVTIVDSLNKRITFLETLSDALQLEHTSFVHDRAETFGQRKDVRESFDLVTARAVARLSVLSELCLPLAKKNGVFAALKAAAADEELKAGQKAIKVLGGELEQVHSFTLPVEESERNIMIIRKTKSTPKKYPRKPGTPNKSPIEG.

Residues Gly77, Phe82, 128-129 (AE), and Arg147 contribute to the S-adenosyl-L-methionine site. Residues 215-239 (IRKTKSTPKKYPRKPGTPNKSPIEG) are disordered. The segment covering 216-227 (RKTKSTPKKYPR) has biased composition (basic residues).

It belongs to the methyltransferase superfamily. RNA methyltransferase RsmG family.

It is found in the cytoplasm. Its function is as follows. Specifically methylates the N7 position of guanine in position 535 of 16S rRNA. The protein is Ribosomal RNA small subunit methyltransferase G of Bacillus velezensis (strain DSM 23117 / BGSC 10A6 / LMG 26770 / FZB42) (Bacillus amyloliquefaciens subsp. plantarum).